A 98-amino-acid polypeptide reads, in one-letter code: NADH-ubiquinone oxidoreductase chain 4L (98 aa).

Transmembrane regions (helical) follow at residues 1 to 21, 29 to 49, and 61 to 81; these read MALI…GLLL, SLLC…VMIL, and IVLL…LVMV.

Belongs to the complex I subunit 4L family. As to quaternary structure, core subunit of respiratory chain NADH dehydrogenase (Complex I) which is composed of 45 different subunits.

Its subcellular location is the mitochondrion inner membrane. The enzyme catalyses a ubiquinone + NADH + 5 H(+)(in) = a ubiquinol + NAD(+) + 4 H(+)(out). Its function is as follows. Core subunit of the mitochondrial membrane respiratory chain NADH dehydrogenase (Complex I) which catalyzes electron transfer from NADH through the respiratory chain, using ubiquinone as an electron acceptor. Part of the enzyme membrane arm which is embedded in the lipid bilayer and involved in proton translocation. The polypeptide is NADH-ubiquinone oxidoreductase chain 4L (MT-ND4L) (Rhinolophus monoceros (Formosan lesser horseshoe bat)).